The chain runs to 512 residues: Multidrug export protein EmrB (512 aa).

Topologically, residues 1-12 (MQQQKPLEGAQL) are cytoplasmic. Residues 13-38 (VIMTIALSLATFMQVLDSTIANVAIP) form a helical membrane-spanning segment. Topologically, residues 39–51 (TIAGNLGSSLSQG) are extracellular. A helical transmembrane segment spans residues 52-72 (TWVITSFGVANAISIPLTGWL). At 73 to 81 (AKRVGEVKL) the chain is on the cytoplasmic side. A helical membrane pass occupies residues 82–100 (FLWSTIAFAIASWACGVSS). Residues 101 to 109 (SLNMLIFFR) are Extracellular-facing. The helical transmembrane segment at 110–128 (VIQGIVAGPLIPLSQSLLL) threads the bilayer. Residues 129 to 136 (NNYPPAKR) are Cytoplasmic-facing. Residues 137–159 (SIALALWSMTVIVAPICGPILGG) traverse the membrane as a helical segment. Residues 160 to 164 (YISDN) lie on the Extracellular side of the membrane. Residues 165–189 (YHWGWIFFINVPIGVAVVLMTLQTL) traverse the membrane as a helical segment. The Cytoplasmic portion of the chain corresponds to 190–202 (RGRETRTERRRID). Residues 203–223 (AVGLALLVIGIGSLQIMLDRG) form a helical membrane-spanning segment. Residues 224–233 (KELDWFSSQE) are Extracellular-facing. A helical membrane pass occupies residues 234 to 249 (IIILTVVAVVAICFLI). Residues 250–271 (VWELTDDNPIVDLSLFKSRNFT) lie on the Cytoplasmic side of the membrane. Residues 272–295 (IGCLCISLAYMLYFGAIVLLPQLL) traverse the membrane as a helical segment. At 296–305 (QEVYGYTATW) the chain is on the extracellular side. The helical transmembrane segment at 306–329 (AGLASAPVGIIPVILSPIIGRFAH) threads the bilayer. Topologically, residues 330-335 (KLDMRR) are cytoplasmic. A helical transmembrane segment spans residues 336–355 (LVTFSFIMYAVCFYWRAYTF). Topologically, residues 356 to 363 (EPGMDFGA) are extracellular. Residues 364-387 (SAWPQFIQGFAVACFFMPLTTITL) form a helical membrane-spanning segment. Over 388–407 (SGLPPERLAAASSLSNFTRT) the chain is Cytoplasmic. Residues 408-428 (LAGSIGTSITTTMWTNRESMH) traverse the membrane as a helical segment. The Extracellular segment spans residues 429 to 481 (HAQLTESVNPFNPNAQAMYSQLEGLGMTQQQASGWIAQQITNQGLIISANEIF). Residues 482–504 (WMSAGIFLVLLGLVWFAKPPFGA) form a helical membrane-spanning segment. At 505–512 (GGGGGGAH) the chain is on the cytoplasmic side.

This sequence belongs to the major facilitator superfamily. EmrB family. In terms of assembly, part of the tripartite efflux system EmrAB-TolC, which is composed of an inner membrane transporter, EmrB, a periplasmic membrane fusion protein, EmrA, and an outer membrane component, TolC. The complex forms a large protein conduit and can translocate molecules across both the inner and outer membranes. Interacts with EmrA.

It localises to the cell inner membrane. In terms of biological role, part of the tripartite efflux system EmrAB-TolC, which confers resistance to antibiotics. The protein is Multidrug export protein EmrB (emrB) of Escherichia coli O157:H7.